The primary structure comprises 356 residues: Magnesium-protoporphyrin IX monomethyl ester [oxidative] cyclase (356 aa).

It belongs to the AcsF family. It depends on Fe cation as a cofactor.

The catalysed reaction is Mg-protoporphyrin IX 13-monomethyl ester + 3 NADPH + 3 O2 + 2 H(+) = 3,8-divinyl protochlorophyllide a + 3 NADP(+) + 5 H2O. The protein operates within porphyrin-containing compound metabolism; chlorophyll biosynthesis (light-independent). Its function is as follows. Catalyzes the formation of the isocyclic ring in chlorophyll biosynthesis. Mediates the cyclase reaction, which results in the formation of divinylprotochlorophyllide (Pchlide) characteristic of all chlorophylls from magnesium-protoporphyrin IX 13-monomethyl ester (MgPMME). The protein is Magnesium-protoporphyrin IX monomethyl ester [oxidative] cyclase of Synechococcus sp. (strain CC9605).